Consider the following 251-residue polypeptide: Hydroxyacylglutathione hydrolase (251 aa).

Positions 53, 55, 57, 58, 110, 127, and 165 each coordinate Zn(2+).

This sequence belongs to the metallo-beta-lactamase superfamily. Glyoxalase II family. In terms of assembly, monomer. Zn(2+) is required as a cofactor.

The catalysed reaction is an S-(2-hydroxyacyl)glutathione + H2O = a 2-hydroxy carboxylate + glutathione + H(+). It functions in the pathway secondary metabolite metabolism; methylglyoxal degradation; (R)-lactate from methylglyoxal: step 2/2. Its function is as follows. Thiolesterase that catalyzes the hydrolysis of S-D-lactoyl-glutathione to form glutathione and D-lactic acid. In Salmonella typhi, this protein is Hydroxyacylglutathione hydrolase.